The primary structure comprises 370 residues: D-alanine--D-alanine ligase (370 aa).

The ATP-grasp domain maps to 144–352 (KKIFADAGIP…YSALIERLVD (209 aa)). Residue 177-232 (EEVLTYPVFVKPANLGSSVGISKATNKKELEDAMTEAFLYDRRVVVEQGVVAREIE) coordinates ATP. Aspartate 306, glutamate 319, and asparagine 321 together coordinate Mg(2+).

It belongs to the D-alanine--D-alanine ligase family. The cofactor is Mg(2+). Mn(2+) is required as a cofactor.

It is found in the cytoplasm. It carries out the reaction 2 D-alanine + ATP = D-alanyl-D-alanine + ADP + phosphate + H(+). It participates in cell wall biogenesis; peptidoglycan biosynthesis. Cell wall formation. This is D-alanine--D-alanine ligase from Listeria welshimeri serovar 6b (strain ATCC 35897 / DSM 20650 / CCUG 15529 / CIP 8149 / NCTC 11857 / SLCC 5334 / V8).